The primary structure comprises 164 residues: Transcription elongation factor GreA (164 aa).

It belongs to the GreA/GreB family.

Its function is as follows. Necessary for efficient RNA polymerase transcription elongation past template-encoded arresting sites. The arresting sites in DNA have the property of trapping a certain fraction of elongating RNA polymerases that pass through, resulting in locked ternary complexes. Cleavage of the nascent transcript by cleavage factors such as GreA or GreB allows the resumption of elongation from the new 3'terminus. GreA releases sequences of 2 to 3 nucleotides. This chain is Transcription elongation factor GreA, found in Helicobacter pylori (strain Shi470).